The following is a 363-amino-acid chain: RNA exonuclease NGL1 (363 aa).

The transit peptide at 1 to 23 directs the protein to the mitochondrion; the sequence is MFTRRFIPVVQSTKQNIGKYVRK.

The protein belongs to the CCR4/nocturin family.

It is found in the mitochondrion. The polypeptide is RNA exonuclease NGL1 (NGL1) (Saccharomyces cerevisiae (strain ATCC 204508 / S288c) (Baker's yeast)).